Consider the following 56-residue polypeptide: Large ribosomal subunit protein bL33 (56 aa).

It belongs to the bacterial ribosomal protein bL33 family.

The chain is Large ribosomal subunit protein bL33 from Rickettsia typhi (strain ATCC VR-144 / Wilmington).